Here is a 310-residue protein sequence, read N- to C-terminus: 2-dehydro-3-deoxygluconokinase (310 aa).

Substrate is bound by residues 29–33 (GDTLN), Y89, 103–105 (YWR), and R171. Residues 169 to 171 (NYR), 229 to 234 (KRGADA), and 262 to 265 (AAGD) contribute to the ATP site. A substrate-binding site is contributed by D265. The active-site Proton acceptor is the D265.

Belongs to the carbohydrate kinase PfkB family.

The catalysed reaction is 2-dehydro-3-deoxy-D-gluconate + ATP = 2-dehydro-3-deoxy-6-phospho-D-gluconate + ADP + H(+). It participates in carbohydrate acid metabolism; 2-dehydro-3-deoxy-D-gluconate degradation; D-glyceraldehyde 3-phosphate and pyruvate from 2-dehydro-3-deoxy-D-gluconate: step 1/2. Its function is as follows. Catalyzes the phosphorylation of 2-keto-3-deoxygluconate (KDG) to produce 2-keto-3-deoxy-6-phosphogluconate (KDPG). The protein is 2-dehydro-3-deoxygluconokinase of Dickeya dadantii (strain 3937) (Erwinia chrysanthemi (strain 3937)).